We begin with the raw amino-acid sequence, 401 residues long: S-adenosylmethionine synthase (401 aa).

An ATP-binding site is contributed by His15. Asp17 is a binding site for Mg(2+). Glu43 provides a ligand contact to K(+). L-methionine-binding residues include Glu56 and Gln99. The interval 99-109 (QSPEIGAGVDT) is flexible loop. Residues 101 to 132 (PEIGAGVDTSHEVRGSSSTDEDDRQGAGDQGL) are disordered. ATP-binding positions include 174–176 (DGK), Asp254, 260–261 (RK), Ala277, and Lys281. Residue Asp254 participates in L-methionine binding. Residue Lys285 participates in L-methionine binding.

The protein belongs to the AdoMet synthase family. As to quaternary structure, homotetramer; dimer of dimers. Mg(2+) is required as a cofactor. K(+) serves as cofactor.

The protein localises to the cytoplasm. The enzyme catalyses L-methionine + ATP + H2O = S-adenosyl-L-methionine + phosphate + diphosphate. It participates in amino-acid biosynthesis; S-adenosyl-L-methionine biosynthesis; S-adenosyl-L-methionine from L-methionine: step 1/1. Catalyzes the formation of S-adenosylmethionine (AdoMet) from methionine and ATP. The overall synthetic reaction is composed of two sequential steps, AdoMet formation and the subsequent tripolyphosphate hydrolysis which occurs prior to release of AdoMet from the enzyme. In Corynebacterium urealyticum (strain ATCC 43042 / DSM 7109), this protein is S-adenosylmethionine synthase.